The sequence spans 30 residues: ATP-dependent Clp protease ATP-binding subunit ClpA homolog (30 aa).

The protein belongs to the ClpA/ClpB family.

Its subcellular location is the plastid. It localises to the chloroplast. In terms of biological role, may interact with a ClpP-like protease involved in degradation of denatured proteins in the chloroplast. The polypeptide is ATP-dependent Clp protease ATP-binding subunit ClpA homolog (Pinus pinaster (Maritime pine)).